We begin with the raw amino-acid sequence, 755 residues long: 3-isopropylmalate dehydratase (755 aa).

3 residues coordinate [4Fe-4S] cluster: C353, C413, and C416. 3 disordered regions span residues 427-446, 471-493, and 510-529; these read GERCASTSNRNFEGRQGAGG, LTPAQQDRPASPTPKKIETELEP, and DAPATGASPPSPAPSDAAGM. The span at 510–528 shows a compositional bias: low complexity; that stretch reads DAPATGASPPSPAPSDAAG.

This sequence belongs to the aconitase/IPM isomerase family. Monomer. It depends on [4Fe-4S] cluster as a cofactor.

It carries out the reaction (2R,3S)-3-isopropylmalate = (2S)-2-isopropylmalate. The protein operates within amino-acid biosynthesis; L-leucine biosynthesis; L-leucine from 3-methyl-2-oxobutanoate: step 2/4. Catalyzes the isomerization between 2-isopropylmalate and 3-isopropylmalate, via the formation of 2-isopropylmaleate. This chain is 3-isopropylmalate dehydratase (LEUA), found in Rhizomucor pusillus.